The primary structure comprises 407 residues: Arylacetamide deacetylase-like 4 family member 1 (407 aa).

At 1 to 4 (MLYL) the chain is on the cytoplasmic side. A helical; Signal-anchor for type II membrane protein membrane pass occupies residues 5 to 25 (VGFLLATVCLLVLGVNVWVLI). Residues 26–407 (DHFLTIDVPP…NAVVSYIKDL (382 aa)) lie on the Lumenal side of the membrane. The Involved in the stabilization of the negatively charged intermediate by the formation of the oxyanion hole motif lies at 119 to 121 (HGG). A glycan (N-linked (GlcNAc...) asparagine) is linked at Asn-168. Catalysis depends on residues Ser-193, Asp-347, and His-377.

Belongs to the 'GDXG' lipolytic enzyme family.

Its subcellular location is the membrane. This is Arylacetamide deacetylase-like 4 family member 1 from Mus musculus (Mouse).